The sequence spans 283 residues: V-set domain containing T-cell activation inhibitor 1 (283 aa).

Residues 1–24 form the signal peptide; sequence MASLGQIIFWSIINIIIILAGAIA. Ig-like V-type domains follow at residues 35–144 and 153–241; these read HFIT…ANLE and PEIN…IKVT. Intrachain disulfides connect Cys56–Cys130 and Cys168–Cys225. Residue Asn216 is glycosylated (N-linked (GlcNAc...) asparagine). Gly257 is lipidated: GPI-anchor amidated glycine. Positions 258-283 are cleaved as a propeptide — removed in mature form; it reads PSPCVFSSAFVAGWALLSLSCCLMLR.

The protein belongs to the immunoglobulin superfamily. BTN/MOG family. In terms of processing, N-glycosylated. As to expression, expressed on the surface of professional antigen-presenting cells (at protein level). Widely expressed, including in kidney, liver, lung, pancreas, placenta, prostate, spleen, testis and thymus.

Its subcellular location is the cell membrane. Functionally, negatively regulates T-cell-mediated immune response by inhibiting T-cell activation, proliferation, cytokine production and development of cytotoxicity. When expressed on the cell surface of tumor macrophages, plays an important role, together with regulatory T-cells (Treg), in the suppression of tumor-associated antigen-specific T-cell immunity. Involved in promoting epithelial cell transformation. This chain is V-set domain containing T-cell activation inhibitor 1, found in Mus musculus (Mouse).